Here is a 678-residue protein sequence, read N- to C-terminus: Zinc finger protein 334 (678 aa).

A KRAB domain is found at valine 8–glutamate 79. C2H2-type zinc fingers lie at residues asparagine 235–histidine 257, tyrosine 263–histidine 285, tyrosine 291–histidine 313, tyrosine 319–histidine 341, tyrosine 347–histidine 369, asparagine 375–histidine 397, tyrosine 403–histidine 425, tyrosine 431–histidine 453, tyrosine 459–histidine 481, tyrosine 542–histidine 564, tyrosine 570–histidine 592, tyrosine 598–histidine 620, tyrosine 626–histidine 648, and tyrosine 654–histidine 676.

This sequence belongs to the krueppel C2H2-type zinc-finger protein family.

It is found in the nucleus. May be involved in transcriptional regulation. This is Zinc finger protein 334 (ZNF334) from Pongo abelii (Sumatran orangutan).